The sequence spans 192 residues: Thioredoxin-like 3-2, chloroplastic (192 aa).

A chloroplast-targeting transit peptide spans 1 to 55; the sequence is MSEIVNLSSSLRSLNPKISPLVPPYRQTSSSFSRPRNFKYHSFTDKICLAAERIR. One can recognise a Thioredoxin domain in the interval 66–191; the sequence is LQELDDSPVS…VREMIENDSI (126 aa). Residues Cys-110 and Cys-113 each act as nucleophile in the active site. Cys-110 and Cys-113 are oxidised to a cystine.

The protein belongs to the thioredoxin family.

Its subcellular location is the plastid. The protein localises to the chloroplast stroma. Functionally, probable thiol-disulfide oxidoreductase that may participate in various redox reactions. This chain is Thioredoxin-like 3-2, chloroplastic (WCRKC2), found in Arabidopsis thaliana (Mouse-ear cress).